We begin with the raw amino-acid sequence, 484 residues long: Ribosomal RNA small subunit methyltransferase F (484 aa).

Residues 119 to 125 (ASAPGSK), E143, D170, and D188 each bind S-adenosyl-L-methionine. C241 acts as the Nucleophile in catalysis.

The protein belongs to the class I-like SAM-binding methyltransferase superfamily. RsmB/NOP family.

It localises to the cytoplasm. It carries out the reaction cytidine(1407) in 16S rRNA + S-adenosyl-L-methionine = 5-methylcytidine(1407) in 16S rRNA + S-adenosyl-L-homocysteine + H(+). Its function is as follows. Specifically methylates the cytosine at position 1407 (m5C1407) of 16S rRNA. This is Ribosomal RNA small subunit methyltransferase F from Shewanella frigidimarina (strain NCIMB 400).